The chain runs to 96 residues: Small, acid-soluble spore protein gamma-type (96 aa).

Residues 1 to 15 show a composition bias toward polar residues; it reads MNTKNFTPQESRTNA. A disordered region spans residues 1-96; that stretch reads MNTKNFTPQE…SEAKKRNNQQ (96 aa). Positions 16–27 are enriched in low complexity; it reads QQVRQQNQQSAQ. Residues 28 to 41 are compositionally biased toward polar residues; sequence GTSSGFATEFASET. Repeats lie at residues 28-52 and 61-87; these read GTSS…QNQQ and GATA…NQQS. Composition is skewed to low complexity over residues 42–57 and 76–86; these read NAQQ…AQAN and NVQQVRQQNQQ.

Belongs to the gamma-type SASP family.

SASP are proteins degraded in the first minutes of spore germination and provide amino acids for both new protein synthesis and metabolism. These proteins may be involved in dormant spore's high resistance to UV light. The polypeptide is Small, acid-soluble spore protein gamma-type (Laceyella sacchari (Thermoactinomyces thalpophilus)).